The primary structure comprises 665 residues: Phosphatidylinositol-3-phosphate phosphatase MTMR1 (665 aa).

Met1 is modified (N-acetylmethionine). A compositionally biased stretch (low complexity) spans 1–11; sequence MDRPAAAAAAG. The tract at residues 1-51 is disordered; it reads MDRPAAAAAAGCEGGGGPNPGPAGGRRPPRAAGGATAGSRQPSVETLDSPT. The span at 12-24 shows a compositional bias: gly residues; sequence CEGGGGPNPGPAG. Residues 39-51 show a composition bias toward polar residues; the sequence is SRQPSVETLDSPT. Phosphoserine occurs at positions 43 and 49. The GRAM domain occupies 90–161; the sequence is NKLAQMEEAP…GVISRVEKIG (72 aa). The region spanning 226-601 is the Myotubularin phosphatase domain; that stretch reads GWKVYDPVSE…SHLELWVNYY (376 aa). The a 1,2-diacyl-sn-glycero-3-phospho-(1D-myo-inositol-3-phosphate) site is built by Asn351, Asn376, and Ile377. The active-site Phosphocysteine intermediate is the Cys438. 7 residues coordinate a 1,2-diacyl-sn-glycero-3-phospho-(1D-myo-inositol-3-phosphate): Ser439, Asp440, Gly441, Trp442, Asp443, Arg444, and Arg484. Residue Ser439 coordinates phosphate. Residues Gly441, Trp442, Asp443, and Arg444 each coordinate phosphate. A required for dimerization region spans residues 608–665; that stretch reads MRPQMPIHQNLKELLAVRAELQKRVEGLQREVATRAVSSSSERGSSPSHSATSVHTSV. Residues 642–665 are disordered; the sequence is RAVSSSSERGSSPSHSATSVHTSV. The segment covering 645–657 has biased composition (low complexity); that stretch reads SSSSERGSSPSHS.

Belongs to the protein-tyrosine phosphatase family. Non-receptor class myotubularin subfamily. Homodimer.

It localises to the cell membrane. The protein localises to the cytoplasm. It catalyses the reaction a 1,2-diacyl-sn-glycero-3-phospho-(1D-myo-inositol-3-phosphate) + H2O = a 1,2-diacyl-sn-glycero-3-phospho-(1D-myo-inositol) + phosphate. It carries out the reaction 1,2-dioctanoyl-sn-glycero-3-phospho-(1-D-myo-inositol-3-phosphate) + H2O = 1,2-dioctanoyl-sn-glycero-3-phospho-(1D-myo-inositol) + phosphate. The enzyme catalyses a 1,2-diacyl-sn-glycero-3-phospho-(1D-myo-inositol-3,5-bisphosphate) + H2O = a 1,2-diacyl-sn-glycero-3-phospho-(1D-myo-inositol-5-phosphate) + phosphate. Lipid phosphatase that specifically dephosphorylates the D-3 position of phosphatidylinositol 3-phosphate, generating phosphatidylinositol. Could also dephosphorylate phosphatidylinositol 3,5-bisphosphate to produce phosphatidylinositol 5-phosphate. The chain is Phosphatidylinositol-3-phosphate phosphatase MTMR1 from Homo sapiens (Human).